The sequence spans 597 residues: Elongation factor 4 (597 aa).

Residues 2–184 (KNIRNFSIIA…EIVHKIPAPE (183 aa)) enclose the tr-type G domain. GTP is bound by residues 14–19 (DHGKST) and 131–134 (NKID).

The protein belongs to the TRAFAC class translation factor GTPase superfamily. Classic translation factor GTPase family. LepA subfamily.

It localises to the cell inner membrane. The enzyme catalyses GTP + H2O = GDP + phosphate + H(+). Functionally, required for accurate and efficient protein synthesis under certain stress conditions. May act as a fidelity factor of the translation reaction, by catalyzing a one-codon backward translocation of tRNAs on improperly translocated ribosomes. Back-translocation proceeds from a post-translocation (POST) complex to a pre-translocation (PRE) complex, thus giving elongation factor G a second chance to translocate the tRNAs correctly. Binds to ribosomes in a GTP-dependent manner. The protein is Elongation factor 4 of Actinobacillus succinogenes (strain ATCC 55618 / DSM 22257 / CCUG 43843 / 130Z).